We begin with the raw amino-acid sequence, 571 residues long: MAPSVATSLKAEILPSPRTSSPSSNFKTCVSNENGCINCRCSPSEPHESANVDESVNKLSKTFSKLSLNPTFQALNMDLGLLHENITLDRIPKVPENHVSLIDIDEARAKEDPNFQIHSTPSRMPPHYVQPHPPFSVFPAPILDVRELTKPGAVKRVFHFELDVSNYPLPEGEEWMVGGSFGVMAPNNEEDVDELLQLLHINPDQADAPVLLKTDGGRWPTIWAEDTPRELVTTRRELLKWTVEFMSVAPKKQLIRLLAEYAKDDTERQVLLFLVSRLGQRAFCDLRDHNVTLITLLKAFPSVQLPLDHLLTVLPQLMPRWYSLSNDPKVSNNVLEFAVTVVEINKVEGGTRSGIGSGFLKRLALRFLNGERDLVLPMYRGLHKNAFATHFASDGPMCLIGAGVGVAPFRGFVQRRLTNATCAGKVWVFHGCRDQELDELYHGEWENPLQKSSDDDASSTVSQQTETEMDSFEVKKDGTSGPNHLVVESRSHQHAYVQDEIRHRGDIVWSVLSHPHGKVYLCGGKKGFLDGVENALIDVCVQYGKMSRLEATQQLALWQSPLNLKYIKEIW.

The disordered stretch occupies residues 1 to 25 (MAPSVATSLKAEILPSPRTSSPSSN). Residues 135-389 (FSVFPAPILD…RGLHKNAFAT (255 aa)) enclose the FAD-binding FR-type domain. The disordered stretch occupies residues 447 to 479 (NPLQKSSDDDASSTVSQQTETEMDSFEVKKDGT).

It belongs to the flavoprotein pyridine nucleotide cytochrome reductase family. It depends on FAD as a cofactor.

This is an uncharacterized protein from Schizosaccharomyces pombe (strain 972 / ATCC 24843) (Fission yeast).